The chain runs to 1798 residues: MSDDIKKRFDFPNSLIQSQAVGHLIAAVLKEHGVSEKIHQSTNQTAALNLLWEKCCSDHVVVRTACSEGLVALVAQGHAEFSYVLNGILNLTPSARNMSGLIKALMKLLQMQALREGQSGEKDIQDIYSIRNPPQPLITVLEHRPDCWPLLLQQLTAFFQQCPERSEASCVQIMAPFLWYLYCEPSQLEEYAKLRLSLLKVLLQPRGVCEEAQLSVREQSTLQLCCSMLPCLQMKDLMQTTEMMLFVEEVYLSLLRHPGFWKSQLTQLTLQLLCICEVSLKITGECSSLIHLLERSVELLGEDFPVELVIIGIALLLLQMPASQQKPLLNLALKLLSLTEGQKIPKASLLLLVPLLQILSSTALEDCLAMGEEGPSRQQLALSLVEVLQKERHGDDSHTISCRLAFPVSSMYGSIFTAWRILDVIGEESATSDWLATVESLLSATTVIPPHVFLLLAYLLVEDVGQNLQQILRVTTQLAQADSSQVPNLIPVLMFKLGRPLDPVSYNHILYTLPTLGVHKVCVGQILRVIQLLGTTPRLRAVTLRLLTSLWEKQDRVYPELQRFMAVSDAPSLSVGKELQWEKLIAKAASIRDICKQRPYQHGADMLAAISQVLNECTKPDQATPAALVLQGLHALCQAEVVCIRSTWNALSPKLSCDMRPLILKTLSELFSLVPSLTVNTVEYENFKVQVLSFLWTHTQNKNPTVASAAYKSLSHFSAGEHTILHLPEKIRPEMPVPGELDEEESVDLSIPGACFLRLLTITAPSVLPALEEFFTSLVRQEMVNMPRGIYHSALKGGVRSDQGKTVAGIPNFILKTYETNKQPGLKPGLAGGMLFCYDLAMYQSKDGKPLNRLMASRGRSFKQTTLALIHEVHVQLSEWHRAIFLPQAWLAYMTRAYHAILQGRIAELELQLQHGKEGPEEVQYKRSTAWLWVRDMLTDEITKTAAKESPVVKANALLALSSLAVVVSKHEASLCSDSDGVLEIQPNFLPVKEWVSMVLNTLLVIVDSHYHPSGQLFTCFYHKSYSGENTASAIARSAAATALSLLVPVFIISCKEKVEEILNMLTARLPGKPSADESQAVQIHMGLALGMFLSRLCEEKLSDMSGQQMNLLLMKSLDALESCCFDPSLEYNTGCILGVGLALSLMSHSSHTESRVHVAASLRKLSTYLDESGSQSRTFQEVLVYTLSCVCTSAFSAGIIEAAEAEDIMSKLQLLVENNQQTSGFALALGNLVYGLSVCGHGKAEDLGNRLRPSWIKVVLTEGAPTMLCLAALHGLVALVGSDVDVMQLKSEAIQNTHFQARLNEVIRTLTEVISVSGVIGLQSNAIWLLGHLHLSTLSSNQSRTSVPTDYSYLPEGSFIRAAIGFFITGGKKGPEAVPPSLLKVVMKPIATVGESYQYPPANLAALLSPLMRLNFGEEIQQLCLEIAVTQAPSSQSAASLLGLWVMPPLIHGLSLNIKKYLLVSMPLWAKHVSDEQIQGFVENLMVEVFKTASQPCHPEMCLSALQGLSQAMKLPSPSHHLWSLLCDATGRIFDLLPNRIRRNDLELYISIAKCLSEMTDEGVNQVSQITKDNIEKAAFVKLYLVSQGRLPLMSLTDLLTAAMQHPEKETLAWMILHSLYQARIVNHANTGVLKRLEWLLELMGYVRNIAYQSAPIQNVAPEEALDFLMLIFAAAVVAWADHEAPLLLGLSASWLPWHQQNGPGGPAAALLGRSPMHRVTVQEVLTQLPRSMLLLLQKEPWKEQTQKFIDWLLSIMEIPNKAFAAKSKDLLKATLLSLRVLPEFKKKAVWTRAYGW.

Lys816 is subject to N6-acetyllysine.

In terms of assembly, interacts with VCL. In terms of tissue distribution, expressed by glial and neuronal cells in brain.

The protein resides in the cell junction. The protein localises to the focal adhesion. It is found in the cytoplasm. It localises to the cytosol. Required for the maintenance of SKIC2 and SKIC3 proteostatic levels in the liver. May be involved in the regulation of RNA degradation by the exosome complex. Potential tumor suppressor in gliomas. The chain is Focadhesin (Focad) from Mus musculus (Mouse).